Reading from the N-terminus, the 1228-residue chain is Calcium-transporting ATPase (1228 aa).

Topologically, residues 1-63 (MEEVIKNAHT…FELILNQFDD (63 aa)) are cytoplasmic. The chain crosses the membrane as a helical span at residues 64–81 (LLVKILLLAAFISFVLTL). Topologically, residues 82–92 (LDMKHKKIEIC) are extracellular. Residues 93-112 (DFIEPLVIVLILILNAAVGV) form a helical membrane-spanning segment. The Cytoplasmic portion of the chain corresponds to 113-270 (WQECNAEKSL…IDLFGQQLSK (158 aa)). A helical transmembrane segment spans residues 271–291 (IIFVICVTVWIINFKHFSDPI). Over 292–300 (HGSFLYGCL) the chain is Extracellular. A helical transmembrane segment spans residues 301 to 321 (YYFKISVALAVAAIPEGLPAV). At 322–974 (ITTCLALGTR…IYNNMKAFIR (653 aa)) the chain is on the cytoplasmic side. Asp-358 functions as the 4-aspartylphosphate intermediate in the catalytic mechanism. 2 disordered regions span residues 452–478 (MKND…IPLK) and 562–613 (MPAE…LKNA). The segment covering 589–604 (FFSSKNDNSHITSTLN) has biased composition (polar residues). Lys-716 contributes to the ATP binding site. The helical transmembrane segment at 975-994 (YLISSNIGEVASIFITALLG) threads the bilayer. At 995–1000 (IPDSLA) the chain is on the extracellular side. The chain crosses the membrane as a helical span at residues 1001–1021 (PVQLLWVNLVTDGLPATALGF). The Cytoplasmic segment spans residues 1022–1042 (NPPEHDVMKCKPRHKNDNLIN). Residues 1043–1067 (GLTLLRYIIIGTYVGIATVSIFVYW) form a helical membrane-spanning segment. Over 1068–1118 (FLFYPDSDMHTLINFYQLSHYNQCKAWNNFRVNKVYDMSEDHCSYFSAGKI) the chain is Extracellular. The helical transmembrane segment at 1119-1140 (KASTLSLSVLVLIEMFNALNAL) threads the bilayer. At 1141-1151 (SEYNSLFEIPP) the chain is on the cytoplasmic side. A helical transmembrane segment spans residues 1152 to 1172 (WRNMYLVLATIGSLLLHVLIL). Topologically, residues 1173 to 1185 (YIPPLARIFGVVP) are extracellular. Residues 1186–1206 (LSAYDWFLVFLWSFPVIILDE) form a helical membrane-spanning segment. Topologically, residues 1207–1228 (IIKFYAKRKLKEEQRTKKIKID) are cytoplasmic.

It belongs to the cation transport ATPase (P-type) (TC 3.A.3) family.

The protein localises to the membrane. It carries out the reaction Ca(2+)(in) + ATP + H2O = Ca(2+)(out) + ADP + phosphate + H(+). This magnesium-dependent enzyme catalyzes the hydrolysis of ATP coupled with the transport of the calcium. This chain is Calcium-transporting ATPase (ATP6), found in Plasmodium falciparum (isolate K1 / Thailand).